Reading from the N-terminus, the 388-residue chain is Biotin synthase (388 aa).

The region spanning 47 to 277 (WFGRRVKLNY…DVEVRIAGGR (231 aa)) is the Radical SAM core domain. 3 residues coordinate [4Fe-4S] cluster: Cys65, Cys69, and Cys72. Cys109, Cys142, Cys202, and Arg272 together coordinate [2Fe-2S] cluster. The disordered stretch occupies residues 335–371 (APAGGCGSEQSAGCGSHEGGGACGSAPAPRTDEARTD).

Belongs to the radical SAM superfamily. Biotin synthase family. Homodimer. It depends on [4Fe-4S] cluster as a cofactor. The cofactor is [2Fe-2S] cluster.

The enzyme catalyses (4R,5S)-dethiobiotin + (sulfur carrier)-SH + 2 reduced [2Fe-2S]-[ferredoxin] + 2 S-adenosyl-L-methionine = (sulfur carrier)-H + biotin + 2 5'-deoxyadenosine + 2 L-methionine + 2 oxidized [2Fe-2S]-[ferredoxin]. The protein operates within cofactor biosynthesis; biotin biosynthesis; biotin from 7,8-diaminononanoate: step 2/2. Its function is as follows. Catalyzes the conversion of dethiobiotin (DTB) to biotin by the insertion of a sulfur atom into dethiobiotin via a radical-based mechanism. This Streptomyces avermitilis (strain ATCC 31267 / DSM 46492 / JCM 5070 / NBRC 14893 / NCIMB 12804 / NRRL 8165 / MA-4680) protein is Biotin synthase.